Reading from the N-terminus, the 450-residue chain is MFS-type transporter avaK (450 aa).

Helical transmembrane passes span 18 to 38 (VMAL…LSMP), 100 to 120 (RVVC…SGLL), 148 to 168 (AVAL…AAPA), 171 to 191 (ALVA…MLFV), 244 to 264 (APII…HFLL), 280 to 300 (LVLV…MPAA), 329 to 349 (FGFF…ALAF), and 408 to 428 (GWLG…LVAV).

Belongs to the major facilitator superfamily.

It localises to the membrane. It functions in the pathway secondary metabolite biosynthesis. In terms of biological role, MFS-type transporter; part of the cluster that mediates the biosynthesis of a highly modified cyclo-arginine-tryptophan dipeptide (cRW). The sequence is that of MFS-type transporter avaK from Aspergillus versicolor.